A 484-amino-acid polypeptide reads, in one-letter code: Fumigaclavine B O-acetyltransferase ifgI (484 aa).

This sequence belongs to the fumigaclavine B O-acetyltransferase family. In terms of assembly, monomer.

It catalyses the reaction fumigaclavine B + acetyl-CoA = fumigaclavine A + CoA. Its pathway is alkaloid biosynthesis; ergot alkaloid biosynthesis. Functionally, fumigaclavine B O-acetyltransferase; part of the gene cluster that mediates the biosynthesis of isofumigaclavines, fungal ergot alkaloids. The tryptophan dimethylallyltransferase ifgA catalyzes the first step of ergot alkaloid biosynthesis by condensing dimethylallyl diphosphate (DMAP) and tryptophan to form 4-dimethylallyl-L-tryptophan. The second step is catalyzed by the methyltransferase ifgB that methylates 4-dimethylallyl-L-tryptophan in the presence of S-adenosyl-L-methionine, resulting in the formation of N-methyl-dimethylallyl-L-tryptophan. The catalase ifgD and the FAD-dependent oxidoreductase ifgC then transform N-methyl-dimethylallyl-L-tryptophan to chanoclavine-I which is further oxidized by ifgE in the presence of NAD(+), resulting in the formation of chanoclavine-I aldehyde. The chanoclavine-I aldehyde reductases ifgG and/or fgaOx3 reduce chanoclavine-I aldehyde to dihydrochanoclavine-I aldehyde that spontaneously dehydrates to form 6,8-dimethyl-6,7-didehydroergoline. The festuclavine dehydrogenases ifgF1 and/or ifgF2 then catalyze the reduction of 6,8-dimethyl-6,7-didehydroergoline to form festuclavine. Hydrolysis of festuclavine by a yet undetermined cytochrome P450 monooxygenase (called ifgH) then leads to the formation of isofumigaclavine B which is in turn acetylated by ifgI to isofumigaclavine A. Penicillium roqueforti has interestingly at least two sets of genes for the consumption of chanoclavine-I aldehyde on three different loci, the OYEs ifgG/fgaOx3 and the festuclavine synthase homologs ifgF1/ifgF2. The reason for the duplication of these genes is unclear, probably to ensure the conversion of chanoclavine-I aldehyde by differential gene expression under various environmental conditions. This Penicillium roqueforti (strain FM164) protein is Fumigaclavine B O-acetyltransferase ifgI.